A 573-amino-acid chain; its full sequence is Proline--tRNA ligase (573 aa).

This sequence belongs to the class-II aminoacyl-tRNA synthetase family. ProS type 1 subfamily. Homodimer.

It is found in the cytoplasm. It carries out the reaction tRNA(Pro) + L-proline + ATP = L-prolyl-tRNA(Pro) + AMP + diphosphate. In terms of biological role, catalyzes the attachment of proline to tRNA(Pro) in a two-step reaction: proline is first activated by ATP to form Pro-AMP and then transferred to the acceptor end of tRNA(Pro). As ProRS can inadvertently accommodate and process non-cognate amino acids such as alanine and cysteine, to avoid such errors it has two additional distinct editing activities against alanine. One activity is designated as 'pretransfer' editing and involves the tRNA(Pro)-independent hydrolysis of activated Ala-AMP. The other activity is designated 'posttransfer' editing and involves deacylation of mischarged Ala-tRNA(Pro). The misacylated Cys-tRNA(Pro) is not edited by ProRS. The sequence is that of Proline--tRNA ligase from Limosilactobacillus fermentum (strain NBRC 3956 / LMG 18251) (Lactobacillus fermentum).